A 384-amino-acid polypeptide reads, in one-letter code: G protein-coupled receptor 88 (384 aa).

Residues 1 to 35 (MTNSSSTSTSTTTGGSLLLLCEEEESWAGRRIPVS) are Extracellular-facing. N3 is a glycosylation site (N-linked (GlcNAc...) asparagine). The chain crosses the membrane as a helical span at residues 36-56 (LLYSGLAIGGTLANGMVIYLV). Over 57 to 73 (SSFRKLQTTSNAFIVNG) the chain is Cytoplasmic. A helical membrane pass occupies residues 74–94 (CAADLSVCALWMPQEAVLGLL). Residues 95–116 (PAGSAEPPGDWDSGGGSYRLLR) lie on the Extracellular side of the membrane. Residues 117–136 (GGLLGLGLTVSLLSHCLVAL) traverse the membrane as a helical segment. At 137–158 (NRYLLITRAPATYQVLYQRRHT) the chain is on the cytoplasmic side. A helical transmembrane segment spans residues 159–179 (AGMLALSWALALGLVLLLPPW). At 180–195 (APKPGAEPPQVHYPAL) the chain is on the extracellular side. Residues 196–216 (LAAGALLAQTALLLHCYLGIV) traverse the membrane as a helical segment. At 217-285 (RRVRVSVKRV…RAQRRLSGLS (69 aa)) the chain is on the cytoplasmic side. A helical membrane pass occupies residues 286-306 (VLLLCCVFLLATQPLVWVSLA). The Extracellular segment spans residues 307–310 (SGFS). The chain crosses the membrane as a helical span at residues 311–331 (LPVPWGVQAASWLLCCALSAL). At 332–384 (NPLLYTWRNEEFRRSVRSVLPGVGDAAAAAAAATAVPAMSQAQLGTRAAGQHW) the chain is on the cytoplasmic side.

The protein belongs to the G-protein coupled receptor 1 family. Expressed predominantly in the striatum. Expressed also in olfactory tubercle, nucleus accumbens, amygdala, and neocortex. Spinal cord, pons, and medulla expression remains discrete. Also expressed in peripheral tissues, including adrenal cortex (16 dpc to 21 dpc) and cochlear ganglia (19 dpc to P3) and also at moderate levels in retina (18 dpc to 19 dpc) and spleen (21 dpc to P7).

The protein resides in the cell membrane. The protein localises to the cell projection. Its subcellular location is the cilium membrane. It is found in the cytoplasm. It localises to the nucleus. Its function is as follows. Orphan G protein-coupled receptor implicated in a large repertoire of behavioral responses that engage motor activities, spatial learning, and emotional processing. May play a role in the regulation of cognitive and motor function. Couples with the heterotrimeric G protein complex of the G(i) subfamily, consisting of GNAI1, GNB1 and GNG2, thereby acting through a G(i)-mediated pathway. Plays a role in the attenuation of D1 dopamine receptor (D1R)-mediated cAMP response in ciliated cells. In non-ciliated cells, involved in the inhibition of the beta-2 adrenergic receptor (B2AR) response. The protein is G protein-coupled receptor 88 (Gpr88) of Rattus norvegicus (Rat).